The chain runs to 84 residues: Toxin-like TcoNTxP1 (84 aa).

A signal peptide spans 1–19 (MKRMILFTSCLLLIDIVVG). One can recognise an LCN-type CS-alpha/beta domain in the interval 21–82 (KEGYPADSKG…VWDSATNKCG (62 aa)). Cystine bridges form between C31–C81, C35–C57, C43–C62, and C47–C64. Position 81 is a cysteine amide (C81). A propeptide spanning residues 82 to 84 (GKK) is cleaved from the precursor.

Expressed by the venom gland.

The protein localises to the secreted. Its function is as follows. This protein is not toxic. It induces an immune response similar to that induced by whole venom. Thus, polyclonal antibodies raised against this protein can neutralize the effects of the venom. This Tityus costatus (Brazilian scorpion) protein is Toxin-like TcoNTxP1.